A 353-amino-acid chain; its full sequence is Thiamine-phosphate synthase (353 aa).

Positions 1–128 (MKSMPFAPIA…AASAAAIRYG (128 aa)) are unknown. The interval 129–353 (LYDLEVTVLQ…TSLQLLEALR (225 aa)) is thiamine-phosphate synthase. Residues 185 to 189 (QYRNK) and Asn-217 each bind 4-amino-2-methyl-5-(diphosphooxymethyl)pyrimidine. Residues Asp-218 and Asp-237 each contribute to the Mg(2+) site. Ser-256 lines the 4-amino-2-methyl-5-(diphosphooxymethyl)pyrimidine pocket. 282–284 (TAT) contributes to the 2-[(2R,5Z)-2-carboxy-4-methylthiazol-5(2H)-ylidene]ethyl phosphate binding site. Lys-285 is a 4-amino-2-methyl-5-(diphosphooxymethyl)pyrimidine binding site. A 2-[(2R,5Z)-2-carboxy-4-methylthiazol-5(2H)-ylidene]ethyl phosphate-binding site is contributed by Gly-312.

This sequence belongs to the thiamine-phosphate synthase family. The cofactor is Mg(2+).

It carries out the reaction 2-[(2R,5Z)-2-carboxy-4-methylthiazol-5(2H)-ylidene]ethyl phosphate + 4-amino-2-methyl-5-(diphosphooxymethyl)pyrimidine + 2 H(+) = thiamine phosphate + CO2 + diphosphate. The catalysed reaction is 2-(2-carboxy-4-methylthiazol-5-yl)ethyl phosphate + 4-amino-2-methyl-5-(diphosphooxymethyl)pyrimidine + 2 H(+) = thiamine phosphate + CO2 + diphosphate. It catalyses the reaction 4-methyl-5-(2-phosphooxyethyl)-thiazole + 4-amino-2-methyl-5-(diphosphooxymethyl)pyrimidine + H(+) = thiamine phosphate + diphosphate. It participates in cofactor biosynthesis; thiamine diphosphate biosynthesis; thiamine phosphate from 4-amino-2-methyl-5-diphosphomethylpyrimidine and 4-methyl-5-(2-phosphoethyl)-thiazole: step 1/1. In terms of biological role, condenses 4-methyl-5-(beta-hydroxyethyl)thiazole monophosphate (THZ-P) and 2-methyl-4-amino-5-hydroxymethyl pyrimidine pyrophosphate (HMP-PP) to form thiamine monophosphate (TMP). This is Thiamine-phosphate synthase from Prochlorococcus marinus (strain MIT 9313).